Here is a 628-residue protein sequence, read N- to C-terminus: ATP-binding cassette sub-family F member 2 (628 aa).

Residues M1–E57 are disordered. Basic and acidic residues predominate over residues A40–T53. 2 consecutive ABC transporter domains span residues V91–M330 and I401–E618. An ATP-binding site is contributed by G123 to S130. T223 bears the Phosphothreonine mark. K309 is modified (N6-acetyllysine). G435–S442 contacts ATP. A Phosphoserine modification is found at S517.

It belongs to the ABC transporter superfamily. ABCF family. EF3 subfamily.

This is ATP-binding cassette sub-family F member 2 from Mus musculus (Mouse).